We begin with the raw amino-acid sequence, 337 residues long: Quinolinate synthase (337 aa).

Histidine 40 and serine 57 together coordinate iminosuccinate. Cysteine 102 provides a ligand contact to [4Fe-4S] cluster. Iminosuccinate contacts are provided by residues 128-130 (YVN) and serine 145. Residue cysteine 189 participates in [4Fe-4S] cluster binding. Iminosuccinate-binding positions include 215–217 (HPE) and threonine 243. Cysteine 288 provides a ligand contact to [4Fe-4S] cluster.

Belongs to the quinolinate synthase family. Type 2 subfamily. [4Fe-4S] cluster is required as a cofactor.

The protein localises to the cytoplasm. It carries out the reaction iminosuccinate + dihydroxyacetone phosphate = quinolinate + phosphate + 2 H2O + H(+). It participates in cofactor biosynthesis; NAD(+) biosynthesis; quinolinate from iminoaspartate: step 1/1. Functionally, catalyzes the condensation of iminoaspartate with dihydroxyacetone phosphate to form quinolinate. This chain is Quinolinate synthase, found in Mycobacterium sp. (strain JLS).